The sequence spans 140 residues: Nucleoside diphosphate kinase (140 aa).

ATP is bound by residues Lys-11, Phe-59, Arg-87, Thr-93, Arg-104, and Asn-114. Catalysis depends on His-117, which acts as the Pros-phosphohistidine intermediate.

It belongs to the NDK family. In terms of assembly, homotetramer. Mg(2+) is required as a cofactor.

It localises to the cytoplasm. The catalysed reaction is a 2'-deoxyribonucleoside 5'-diphosphate + ATP = a 2'-deoxyribonucleoside 5'-triphosphate + ADP. It carries out the reaction a ribonucleoside 5'-diphosphate + ATP = a ribonucleoside 5'-triphosphate + ADP. Major role in the synthesis of nucleoside triphosphates other than ATP. The ATP gamma phosphate is transferred to the NDP beta phosphate via a ping-pong mechanism, using a phosphorylated active-site intermediate. This is Nucleoside diphosphate kinase from Azorhizobium caulinodans (strain ATCC 43989 / DSM 5975 / JCM 20966 / LMG 6465 / NBRC 14845 / NCIMB 13405 / ORS 571).